Reading from the N-terminus, the 253-residue chain is uncharacterized protein (253 aa).

10 to 34 (LVTGASSGLGRGLALWLARRGVRVF) contacts NADP(+). Serine 142 provides a ligand contact to substrate. The active-site Proton acceptor is the tyrosine 155.

The protein belongs to the short-chain dehydrogenases/reductases (SDR) family.

This is an uncharacterized protein from Myxococcus xanthus (strain DK1622).